The sequence spans 326 residues: GTP cyclohydrolase MptA (326 aa).

It belongs to the GTP cyclohydrolase IV family. In terms of assembly, homodimer. Fe(2+) serves as cofactor.

The catalysed reaction is GTP + H2O = 7,8-dihydroneopterin 2',3'-cyclic phosphate + formate + diphosphate + H(+). It participates in cofactor biosynthesis; 5,6,7,8-tetrahydromethanopterin biosynthesis. Functionally, converts GTP to 7,8-dihydro-D-neopterin 2',3'-cyclic phosphate, the first intermediate in the biosynthesis of coenzyme methanopterin. In Methanoregula boonei (strain DSM 21154 / JCM 14090 / 6A8), this protein is GTP cyclohydrolase MptA.